Reading from the N-terminus, the 707-residue chain is Polyribonucleotide nucleotidyltransferase (707 aa).

Positions 485 and 491 each coordinate Mg(2+). Positions 552 to 611 (PRIYTMKIDPKKIKDVIGKGGATIRTLTEETGTSIDIDDDGTVKIAAIDGNAVKEVMARI) constitute a KH domain. Positions 621-689 (GAVYTGKVTR…RQGRIRLTMK (69 aa)) constitute an S1 motif domain.

Belongs to the polyribonucleotide nucleotidyltransferase family. In terms of assembly, component of the RNA degradosome, which is a multiprotein complex involved in RNA processing and mRNA degradation. It depends on Mg(2+) as a cofactor.

The protein localises to the cytoplasm. It carries out the reaction RNA(n+1) + phosphate = RNA(n) + a ribonucleoside 5'-diphosphate. Its function is as follows. Involved in mRNA degradation. Catalyzes the phosphorolysis of single-stranded polyribonucleotides processively in the 3'- to 5'-direction. The chain is Polyribonucleotide nucleotidyltransferase from Actinobacillus succinogenes (strain ATCC 55618 / DSM 22257 / CCUG 43843 / 130Z).